The chain runs to 372 residues: Transaldolase 2 (372 aa).

Lysine 140 serves as the catalytic Schiff-base intermediate with substrate.

Belongs to the transaldolase family. Type 2 subfamily.

It is found in the cytoplasm. It carries out the reaction D-sedoheptulose 7-phosphate + D-glyceraldehyde 3-phosphate = D-erythrose 4-phosphate + beta-D-fructose 6-phosphate. The protein operates within carbohydrate degradation; pentose phosphate pathway; D-glyceraldehyde 3-phosphate and beta-D-fructose 6-phosphate from D-ribose 5-phosphate and D-xylulose 5-phosphate (non-oxidative stage): step 2/3. Transaldolase is important for the balance of metabolites in the pentose-phosphate pathway. This chain is Transaldolase 2, found in Streptomyces coelicolor (strain ATCC BAA-471 / A3(2) / M145).